Reading from the N-terminus, the 142-residue chain is Large ribosomal subunit protein uL24 (142 aa).

Over residues 1–11 (MKVNPFVSSDS) the composition is skewed to polar residues. A disordered region spans residues 1–24 (MKVNPFVSSDSGKSRKAHFNAPSH).

Belongs to the universal ribosomal protein uL24 family.

The protein is Large ribosomal subunit protein uL24 (rpl-26) of Caenorhabditis elegans.